Reading from the N-terminus, the 405-residue chain is Squamosa promoter-binding-like protein 6 (405 aa).

An SBP-type zinc finger spans residues 121–198 (NPLCQVYGCS…AGHNERRRKP (78 aa)). Zn(2+)-binding residues include C124, C129, C146, H149, C165, C168, H172, and C184. The short motif at 181 to 197 (KRSCRRRLAGHNERRRK) is the Bipartite nuclear localization signal element.

Zn(2+) is required as a cofactor.

It localises to the nucleus. Functionally, trans-acting factor that binds specifically to the consensus nucleotide sequence 5'-TNCGTACAA-3'. This is Squamosa promoter-binding-like protein 6 (SPL6) from Arabidopsis thaliana (Mouse-ear cress).